Here is a 329-residue protein sequence, read N- to C-terminus: GTP 3',8-cyclase (329 aa).

The region spanning 8–234 (AFARKFYYLR…QLRQRSDGPA (227 aa)) is the Radical SAM core domain. Arg-17 lines the GTP pocket. [4Fe-4S] cluster contacts are provided by Cys-24 and Cys-28. Tyr-30 is a binding site for S-adenosyl-L-methionine. Cys-31 contributes to the [4Fe-4S] cluster binding site. Arg-68 provides a ligand contact to GTP. Residue Gly-72 participates in S-adenosyl-L-methionine binding. GTP is bound at residue Thr-99. Residue Ser-123 coordinates S-adenosyl-L-methionine. GTP is bound at residue Lys-160. Met-194 is an S-adenosyl-L-methionine binding site. Residues Cys-257 and Cys-260 each coordinate [4Fe-4S] cluster. 262–264 (RLR) provides a ligand contact to GTP. [4Fe-4S] cluster is bound at residue Cys-274.

It belongs to the radical SAM superfamily. MoaA family. Monomer and homodimer. It depends on [4Fe-4S] cluster as a cofactor.

It catalyses the reaction GTP + AH2 + S-adenosyl-L-methionine = (8S)-3',8-cyclo-7,8-dihydroguanosine 5'-triphosphate + 5'-deoxyadenosine + L-methionine + A + H(+). Its pathway is cofactor biosynthesis; molybdopterin biosynthesis. Catalyzes the cyclization of GTP to (8S)-3',8-cyclo-7,8-dihydroguanosine 5'-triphosphate. In Escherichia coli O139:H28 (strain E24377A / ETEC), this protein is GTP 3',8-cyclase.